Consider the following 124-residue polypeptide: Non-specific lipid-transfer protein (124 aa).

The N-terminal stretch at 1 to 26 is a signal peptide; the sequence is MANSGVMKLVCLVLACMVVAAPLAEA. 4 cysteine pairs are disulfide-bonded: C30–C77, C40–C54, C55–C100, and C75–C114.

It belongs to the plant LTP family.

Plant non-specific lipid-transfer proteins transfer phospholipids as well as galactolipids across membranes. May play a role in wax or cutin deposition in the cell walls of expanding epidermal cells and certain secretory tissues. The chain is Non-specific lipid-transfer protein from Macadamia integrifolia (Macadamia nut).